A 104-amino-acid chain; its full sequence is uncharacterized protein (104 aa).

The stretch at 24–69 (VIKQIIEKYNDKVKELDTLKNQYQNLQQDYENLKQQVSLQRQTMIS) forms a coiled coil.

This is an uncharacterized protein from Acanthamoeba polyphaga mimivirus (APMV).